Consider the following 264-residue polypeptide: Probable membrane transporter protein HI_0902 (264 aa).

9 helical membrane passes run 4–24 (FILL…LFGI), 28–48 (LVIV…ESLL), 49–69 (MSTA…GSAQ), 81–101 (AVRI…LFIG), 107–127 (ISAK…VLSI), 147–167 (ILIG…IVPF), 183–203 (AFCG…SGWG), 210–230 (YSLG…SFFT), and 243–263 (VSTL…NMFL).

This sequence belongs to the 4-toluene sulfonate uptake permease (TSUP) (TC 2.A.102) family.

It is found in the cell membrane. The sequence is that of Probable membrane transporter protein HI_0902 from Haemophilus influenzae (strain ATCC 51907 / DSM 11121 / KW20 / Rd).